The sequence spans 342 residues: MKALSKLHKEVGIWMTDVPAPELGHNDLLIKIRKTAICGTDIHIYNWDEWSQKTIPVPMVVGHEYVGEVVAIGQEVRGFAVGDRVSGEGHITCGHCRNCRAGRTHLCRNTIGVGVNRPGAFAEYLVIPAFNAFKLPDNVPDELAAIFDPFGNAVHTALSFDLVGEDVLITGAGPIGIMAAAVCRHVGARHVVITDVNEYRLELARKMGATRAVNVTKEQLSGVMSELGMTEGFDVGLEMSGVPSAFQDMIDKMNHGGKIAMLGIPPATMAIDWGKVIFKGLFIKGIYGREMFETWYKMASLIQSGLDLSPIITHRFHIDDFQQGFDAMRSGQSGKVILSWDK.

C38 contributes to the Zn(2+) binding site. Catalysis depends on charge relay system residues T40 and H43. The Zn(2+) site is built by H63, E64, C93, C96, C99, and C107. NAD(+)-binding positions include I175, D195, R200, 262–264, and 286–287; these read LGI and IY.

Belongs to the zinc-containing alcohol dehydrogenase family. In terms of assembly, homotetramer. Requires Zn(2+) as cofactor.

It is found in the cytoplasm. The catalysed reaction is L-threonine + NAD(+) = (2S)-2-amino-3-oxobutanoate + NADH + H(+). It functions in the pathway amino-acid degradation; L-threonine degradation via oxydo-reductase pathway; glycine from L-threonine: step 1/2. Functionally, catalyzes the NAD(+)-dependent oxidation of L-threonine to 2-amino-3-ketobutyrate. This chain is L-threonine 3-dehydrogenase, found in Aeromonas hydrophila subsp. hydrophila (strain ATCC 7966 / DSM 30187 / BCRC 13018 / CCUG 14551 / JCM 1027 / KCTC 2358 / NCIMB 9240 / NCTC 8049).